A 97-amino-acid polypeptide reads, in one-letter code: Co-chaperonin GroES (97 aa).

It belongs to the GroES chaperonin family. Heptamer of 7 subunits arranged in a ring. Interacts with the chaperonin GroEL.

It localises to the cytoplasm. Functionally, together with the chaperonin GroEL, plays an essential role in assisting protein folding. The GroEL-GroES system forms a nano-cage that allows encapsulation of the non-native substrate proteins and provides a physical environment optimized to promote and accelerate protein folding. GroES binds to the apical surface of the GroEL ring, thereby capping the opening of the GroEL channel. The sequence is that of Co-chaperonin GroES from Stenotrophomonas maltophilia (Pseudomonas maltophilia).